The following is an 85-amino-acid chain: Large ribosomal subunit protein bL27 (85 aa).

Residues 1-21 (MAHKKAAGSTKNGRDSNAKRL) are disordered.

Belongs to the bacterial ribosomal protein bL27 family.

In Hydrogenovibrio crunogenus (strain DSM 25203 / XCL-2) (Thiomicrospira crunogena), this protein is Large ribosomal subunit protein bL27.